Reading from the N-terminus, the 464-residue chain is Isthmin-1 (464 aa).

The signal sequence occupies residues 1–29 (MVRLAAELLLLLGLLLLTLHITVLRGSGA). N-linked (GlcNAc...) asparagine glycosylation occurs at N39. Disordered stretches follow at residues 50 to 98 (NVGS…LQRD), 135 to 155 (PDSE…SVPS), and 173 to 219 (SGDQ…STDG). Residues 51 to 63 (VGSDTTSETSFSL) show a composition bias toward polar residues. Basic and acidic residues-rich tracts occupy residues 66-76 (EAPREHLDHQA) and 138-147 (EADKDQHPEN). The region spanning 218–262 (DGEGDWSLWSVCSVTCGNGNQKRTRSCGYACTATESRTCDRPNCP) is the TSP type-1 domain. 3 disulfide bridges follow: C229/C256, C233/C261, and C244/C248. An AMOP domain is found at 289 to 452 (LFEVDTDSCE…QKCTESPSDE (164 aa)).

This sequence belongs to the isthmin family. In terms of assembly, interacts with integrin ITGAV/ITGB5.

It is found in the secreted. In terms of biological role, acts as an angiogenesis inhibitor. This is Isthmin-1 (ISM1) from Homo sapiens (Human).